A 495-amino-acid polypeptide reads, in one-letter code: MEYLLSIDQGTTSSRATLYAASGESLATASRPLAQHYPNPGWVEHDPQEIWEGQLACITEAVAKAGIAPSQIAGVGITNQRETTVVWERETGLPLHRAIVWQDRRTAELTESLKEQGLEAMVRERTGLLLDPYFSASKLCWLLDRVDGLRQRAERGEVCFGTVDSWLMFKLSGGKSHLTDISNASRTMLFNINTLEWDEELLRLFRIPRGMLPEVRGSAAGFGHTSGEVAGAEIHIAGVAGDQQAALFGQGCFAPGMAKATFGTGAFVVMNSGARPGVGDGALSTIAWQLPGEAVQYALEGSIFIAGAAVQWLQEGLGLIGNAREVEVLAASVPDSGGVYFVPALSGLGTPYWDPYARGVVAGLTRGSTKAHLARAALEAIAFQTLDAIRAMEQASGIALKELRVDGGAAANNLLLQIQADLLGVPVLRPRCTESTSLGAAFLAGIGAGVLDTSAIAAQWALDRRFEPQMERERREELHRGWQKCVRLSLGWEKN.

Thr11 serves as a coordination point for ADP. ATP-binding residues include Thr11, Thr12, and Ser13. Thr11 is a binding site for sn-glycerol 3-phosphate. An ADP-binding site is contributed by Arg15. Residues Arg81, Glu82, Tyr133, and Asp242 each coordinate sn-glycerol 3-phosphate. Glycerol-binding residues include Arg81, Glu82, Tyr133, Asp242, and Gln243. The ADP site is built by Thr264 and Gly307. Positions 264, 307, 311, and 408 each coordinate ATP. 2 residues coordinate ADP: Gly408 and Asn412.

This sequence belongs to the FGGY kinase family.

The catalysed reaction is glycerol + ATP = sn-glycerol 3-phosphate + ADP + H(+). The protein operates within polyol metabolism; glycerol degradation via glycerol kinase pathway; sn-glycerol 3-phosphate from glycerol: step 1/1. Inhibited by fructose 1,6-bisphosphate (FBP). Its function is as follows. Key enzyme in the regulation of glycerol uptake and metabolism. Catalyzes the phosphorylation of glycerol to yield sn-glycerol 3-phosphate. This Citrifermentans bemidjiense (strain ATCC BAA-1014 / DSM 16622 / JCM 12645 / Bem) (Geobacter bemidjiensis) protein is Glycerol kinase.